The sequence spans 209 residues: Ribosomal RNA large subunit methyltransferase E (209 aa).

Residues Gly-63, Trp-65, Asp-83, Asp-99, and Asp-124 each contribute to the S-adenosyl-L-methionine site. Residue Lys-164 is the Proton acceptor of the active site.

Belongs to the class I-like SAM-binding methyltransferase superfamily. RNA methyltransferase RlmE family.

Its subcellular location is the cytoplasm. It catalyses the reaction uridine(2552) in 23S rRNA + S-adenosyl-L-methionine = 2'-O-methyluridine(2552) in 23S rRNA + S-adenosyl-L-homocysteine + H(+). Specifically methylates the uridine in position 2552 of 23S rRNA at the 2'-O position of the ribose in the fully assembled 50S ribosomal subunit. The protein is Ribosomal RNA large subunit methyltransferase E of Buchnera aphidicola subsp. Cinara cedri (strain Cc).